Consider the following 290-residue polypeptide: uncharacterized protein (290 aa).

Positions 161-216 (SNQREVESLEQLVHEQLNKLNTESKMEFENRKNDTKNEVQQLSARIVELHNLLAVS) form a coiled coil. Residues 236-256 (AGVVMAFTGFLVLVIPFGLGV) traverse the membrane as a helical segment.

The protein resides in the mitochondrion membrane. This is an uncharacterized protein from Schizosaccharomyces pombe (strain 972 / ATCC 24843) (Fission yeast).